The sequence spans 373 residues: D-amino-acid oxidase 3 (373 aa).

Residues 1–19 form the signal peptide; it reads MVKYDAVILGSGVLGLSIA. The FAD site is built by S11, L14, D35, A46, S47, G51, and N53. Anthranilate is bound at residue F57. A glycan (N-linked (GlcNAc...) asparagine) is linked at N180. A disulfide bridge links C214 with C271. Anthranilate-binding residues include Y229, Y246, and R296. (R)-lactate-binding residues include Y229, Y246, and R296. The FAD site is built by R296, G342, G345, Y346, and Q347. The Microbody targeting signal motif lies at 371–373; it reads AKL.

The protein belongs to the DAMOX/DASOX family. The cofactor is FAD.

The protein localises to the peroxisome matrix. The catalysed reaction is a D-alpha-amino acid + O2 + H2O = a 2-oxocarboxylate + H2O2 + NH4(+). Functionally, catalyzes the oxidative deamination of D-amino acids with broad substrate specificity. Enables the organism to utilize D-amino acids as a source of nutrients. Enables the organism to utilize D-glutamate and D-methionine as a nitrogen source. Protects the organism from the toxicity of D-amino acids, including from D-glutamate. May play a role in its interaction with the host. The polypeptide is D-amino-acid oxidase 3 (Cryptococcus neoformans var. grubii serotype A (strain H99 / ATCC 208821 / CBS 10515 / FGSC 9487) (Filobasidiella neoformans var. grubii)).